The chain runs to 289 residues: MEISEKAPAKLNLSLDTPFRHQDGEPEWRMVMTAIDLSDYVHIKTIPNSKEITVQTNTGFLPCDQRNLAYQAAKLLQSKLDKPEGVEIEIDKHIPVSAGMGGGSADAAAVLRGLNKIWNLNMSREELAKLALTIDSDVPFCVYSEPALVTGRGEKITPIGPLPPMWLVIAKPQASVSTPTILRQIHEQHLNHQEVQNVVSAIKQQDFDKMCRHMGNALEPITMKKCPDIIKIKDKMLQFGADAAQMSGSGPTVFGISQKKSRATHIYNSLRGFCKEVYLVRALDSLTTK.

Residue Lys-10 is part of the active site. 95 to 105 provides a ligand contact to ATP; that stretch reads PVSAGMGGGSA. Asp-137 is an active-site residue.

This sequence belongs to the GHMP kinase family. IspE subfamily.

The enzyme catalyses 4-CDP-2-C-methyl-D-erythritol + ATP = 4-CDP-2-C-methyl-D-erythritol 2-phosphate + ADP + H(+). Its pathway is isoprenoid biosynthesis; isopentenyl diphosphate biosynthesis via DXP pathway; isopentenyl diphosphate from 1-deoxy-D-xylulose 5-phosphate: step 3/6. Its function is as follows. Catalyzes the phosphorylation of the position 2 hydroxy group of 4-diphosphocytidyl-2C-methyl-D-erythritol. This is 4-diphosphocytidyl-2-C-methyl-D-erythritol kinase from Ligilactobacillus salivarius (strain UCC118) (Lactobacillus salivarius).